Reading from the N-terminus, the 262-residue chain is Hydroxyethylthiazole kinase (262 aa).

Methionine 44 is a binding site for substrate. ATP contacts are provided by arginine 118 and serine 166. Glycine 193 contacts substrate.

This sequence belongs to the Thz kinase family. Mg(2+) is required as a cofactor.

The catalysed reaction is 5-(2-hydroxyethyl)-4-methylthiazole + ATP = 4-methyl-5-(2-phosphooxyethyl)-thiazole + ADP + H(+). Its pathway is cofactor biosynthesis; thiamine diphosphate biosynthesis; 4-methyl-5-(2-phosphoethyl)-thiazole from 5-(2-hydroxyethyl)-4-methylthiazole: step 1/1. Catalyzes the phosphorylation of the hydroxyl group of 4-methyl-5-beta-hydroxyethylthiazole (THZ). This chain is Hydroxyethylthiazole kinase, found in Chlamydia abortus (strain DSM 27085 / S26/3) (Chlamydophila abortus).